We begin with the raw amino-acid sequence, 50 residues long: Omega-conotoxin Bu8 (50 aa).

A1 is a signal peptide. A propeptide spanning residues 2-24 is cleaved from the precursor; it reads EDSRGTQLHRALRKATKLSESTR. Cystine bridges form between C25–C40, C32–C44, and C39–C49. A Cysteine amide modification is found at C49.

The protein belongs to the conotoxin O1 superfamily. Expressed by the venom duct.

The protein localises to the secreted. Its function is as follows. Omega-conotoxins act at presynaptic membranes, they bind and block voltage-gated calcium channels (Cav). This toxin selectively and potently inhibits depolarization-activated rat Cav2.2/CACNA1B currents (IC(50)=89 nM), when coexpressed with alpha-2/delta-1 (CACNA2D1) and beta-3 (CACNB3) subunits. In vivo, is lethal to fish and displays potent analgesic activity in mice pain models of hot plate and acetic acid writhing but has fewer side effects on mouse motor function and lower toxicity in goldfish. Shows higher or similar analgesic activity in the pain models mentioned above compared to MVIIA, and lower side effects. In addition, it blocks Cav2.2/CACNA1B more rapidly than MVIIA and also dissociates more rapidly. In Conus bullatus (Bubble cone), this protein is Omega-conotoxin Bu8.